Consider the following 519-residue polypeptide: MARGKNVELSEYERKRQENIAKTQALLRNLEMEAAEAGLGPTGKSRAAASSKPRVKKPAPKKIKQEDIAPRRTSSRLKGIEADSEKAKRKAEDEYVAIKEADRAKRQRVSDAFNFSDIVVAGKDWNRSGNFLSIGPANPYERTFDFDDVKETTDKELRALREKMSGLQLWEDFEPNEIKITPERIYAMGMHPTTEKPLVFAGDKLGNLGICDASQKVAEVKQEDDEDADNEGPTITTLKPHTRTIHTFQFSPHDSNALYSASYDSSVRKLDLAKGVAVEVYGPSDPNEDQPLSGLEISKDDANTLYFSTLDGRFGIYDMRTPSDQAELFQLSEKKIGGFSLHPQQPHLVATASLDRTLKIWDLRKISGKGDSRLPALVGEHESRLSVSHAAWNSAGQVATASYDDTIKIHDFSKSAEWATGTALTDADMKPSVVVPHNNQTGRWVTILRAQWQQFPQDGVQRFCIGNMNRFVDIYTAKGQQLAQLGGDGITAVPAVAKFHPTLDWVAAGTASGKLCLWM.

Positions 35-92 (AEAGLGPTGKSRAAASSKPRVKKPAPKKIKQEDIAPRRTSSRLKGIEADSEKAKRKAE) are disordered. Basic residues predominate over residues 53-62 (PRVKKPAPKK). Positions 78–92 (KGIEADSEKAKRKAE) are enriched in basic and acidic residues. WD repeat units follow at residues 240 to 280 (PHTR…AVEV), 287 to 327 (NEDQ…DQAE), 331 to 371 (LSEK…GKGD), 380 to 420 (EHES…EWAT), 442 to 485 (GRWV…LAQL), and 488 to 519 (DGIT…CLWM).

Belongs to the WD repeat DDB2/WDR76 family.

DNA-binding protein that binds to both single- and double-stranded DNA. Binds preferentially to UV-damaged DNA. May be involved in DNA-metabolic processes. This is DNA damage-binding protein CMR1 from Phaeosphaeria nodorum (strain SN15 / ATCC MYA-4574 / FGSC 10173) (Glume blotch fungus).